The primary structure comprises 69 residues: QTWPPVEGRPSCKRCGACTRMWPPEANRCVCDDIVPQCHEGCSKCEKVDTRSGKPLYQCQSFEYYNCAA.

4 disulfides stabilise this stretch: cysteine 12–cysteine 31, cysteine 18–cysteine 29, cysteine 38–cysteine 45, and cysteine 42–cysteine 59.

The protein belongs to the Bowman-Birk serine protease inhibitor family. As to expression, expressed in bulb (at protein level).

Serine protease inhibitor. This chain is Bowman-Birk type proteinase inhibitor A2, found in Hyacinthus orientalis (Common hyacinth).